A 127-amino-acid chain; its full sequence is MFNKSALIGSLLRRSFGTTNPLRQAIKNHQPNEMEKRFLVWSGKYKSQAEVPAFVSQDEMERVRNKMRIRLANIMIALTVIGCGIMVYSGKQAAKRGESVSKMNLEWHKQFNELKPEGGAAAPASTK.

The chain crosses the membrane as a helical span at residues 69–88 (IRLANIMIALTVIGCGIMVY).

Belongs to the UPF0389 family.

It localises to the membrane. This is UPF0389 protein GA21628 from Drosophila pseudoobscura pseudoobscura (Fruit fly).